Consider the following 179-residue polypeptide: Large ribosomal subunit protein uL6 (179 aa).

The protein belongs to the universal ribosomal protein uL6 family. In terms of assembly, part of the 50S ribosomal subunit.

This protein binds to the 23S rRNA, and is important in its secondary structure. It is located near the subunit interface in the base of the L7/L12 stalk, and near the tRNA binding site of the peptidyltransferase center. This chain is Large ribosomal subunit protein uL6, found in Chlorobium limicola (strain DSM 245 / NBRC 103803 / 6330).